We begin with the raw amino-acid sequence, 418 residues long: Probable mitochondrial adenine nucleotide transporter BTL2 (418 aa).

Solcar repeat units lie at residues 122 to 205 (MNTR…YRKQ), 215 to 300 (ATNF…LKSS), and 329 to 414 (LGPI…MKIV). Transmembrane regions (helical) follow at residues 127 to 147 (HLWA…PLER), 180 to 200 (GNLL…CAYD), 221 to 241 (FVAG…LDTI), 276 to 296 (LVPS…VYDI), 335 to 355 (LMYG…FEVV), and 383 to 403 (IPAL…SASI).

The protein belongs to the mitochondrial carrier (TC 2.A.29) family.

Its subcellular location is the mitochondrion inner membrane. Its function is as follows. Probable mitochondrial adenylate carrier that catalyzes the transport of ATP, ADP and AMP. The protein is Probable mitochondrial adenine nucleotide transporter BTL2 of Arabidopsis thaliana (Mouse-ear cress).